A 311-amino-acid chain; its full sequence is MAKRTQAILLLLLAISLIMSSSHVDGGGIAIYWGQNGNEGTLTQTCSTRKYSYVNIAFLNKFGNGQTPQINLAGHCNPAAGGCTIVSNGIRSCQIQGIKVMLSLGGGIGSYTLASQADAKNVADYLWNNFLGGKSSSRPLGDAVLDGIDFDIEHGSTLYWDDLARYLSAYSKQGKKVYLTAAPQCPFPDRYLGTALNTGLFDYVWVQFYNNPPCQYSSGNINNIINSWNRWTTSINAGKIFLGLPAAPEAAGSGYVPPDVLISRILPEIKKSPKYGGVMLWSKFYDDKNGYSSSILDSVLFLHSEECMTVL.

The first 26 residues, 1–26 (MAKRTQAILLLLLAISLIMSSSHVDG), serve as a signal peptide directing secretion. Positions 27–302 (GGIAIYWGQN…SSILDSVLFL (276 aa)) constitute a GH18 domain. 2 cysteine pairs are disulfide-bonded: C46/C93 and C76/C83. E153 functions as the Proton donor in the catalytic mechanism. The cysteines at positions 185 and 214 are disulfide-linked. Positions 300-311 (LFLHSEECMTVL) are cleaved as a propeptide — removed in mature form.

This sequence belongs to the glycosyl hydrolase 18 family. Chitinase class II subfamily.

The protein localises to the vacuole. The catalysed reaction is Random endo-hydrolysis of N-acetyl-beta-D-glucosaminide (1-&gt;4)-beta-linkages in chitin and chitodextrins.. It catalyses the reaction Hydrolysis of (1-&gt;4)-beta-linkages between N-acetylmuramic acid and N-acetyl-D-glucosamine residues in a peptidoglycan and between N-acetyl-D-glucosamine residues in chitodextrins.. Bifunctional enzyme with lysozyme / chitinase activity. May have a role in plugging the latex vessel and cessation of latex flow. The sequence is that of Hevamine-A from Hevea brasiliensis (Para rubber tree).